Reading from the N-terminus, the 254-residue chain is Alcohol dehydrogenase (254 aa).

Phenylalanine 10–leucine 33 lines the NAD(+) pocket. Serine 138 provides a ligand contact to substrate. Tyrosine 151 serves as the catalytic Proton acceptor.

The protein belongs to the short-chain dehydrogenases/reductases (SDR) family. As to quaternary structure, homodimer.

The catalysed reaction is a primary alcohol + NAD(+) = an aldehyde + NADH + H(+). The enzyme catalyses a secondary alcohol + NAD(+) = a ketone + NADH + H(+). The polypeptide is Alcohol dehydrogenase (Adh) (Drosophila grimshawi (Hawaiian fruit fly)).